The following is a 425-amino-acid chain: tRNA(Ile)-lysidine synthase (425 aa).

ATP is bound at residue 27–32 (SGGLDS).

The protein belongs to the tRNA(Ile)-lysidine synthase family.

The protein resides in the cytoplasm. It catalyses the reaction cytidine(34) in tRNA(Ile2) + L-lysine + ATP = lysidine(34) in tRNA(Ile2) + AMP + diphosphate + H(+). Ligates lysine onto the cytidine present at position 34 of the AUA codon-specific tRNA(Ile) that contains the anticodon CAU, in an ATP-dependent manner. Cytidine is converted to lysidine, thus changing the amino acid specificity of the tRNA from methionine to isoleucine. This chain is tRNA(Ile)-lysidine synthase, found in Streptococcus pneumoniae (strain P1031).